Consider the following 486-residue polypeptide: UDP-N-acetylmuramate--L-alanine ligase (486 aa).

ATP is bound at residue 129–135; sequence GTHGKTT.

Belongs to the MurCDEF family.

The protein localises to the cytoplasm. The catalysed reaction is UDP-N-acetyl-alpha-D-muramate + L-alanine + ATP = UDP-N-acetyl-alpha-D-muramoyl-L-alanine + ADP + phosphate + H(+). It participates in cell wall biogenesis; peptidoglycan biosynthesis. In terms of biological role, cell wall formation. The chain is UDP-N-acetylmuramate--L-alanine ligase from Vibrio atlanticus (strain LGP32) (Vibrio splendidus (strain Mel32)).